The chain runs to 605 residues: Isocitrate dehydrogenase kinase/phosphatase (605 aa).

ATP is bound by residues 353-359 (APGFKGT) and Lys-374. Residue Asp-413 is part of the active site.

It belongs to the AceK family.

It localises to the cytoplasm. It carries out the reaction L-seryl-[isocitrate dehydrogenase] + ATP = O-phospho-L-seryl-[isocitrate dehydrogenase] + ADP + H(+). In terms of biological role, bifunctional enzyme which can phosphorylate or dephosphorylate isocitrate dehydrogenase (IDH) on a specific serine residue. This is a regulatory mechanism which enables bacteria to bypass the Krebs cycle via the glyoxylate shunt in response to the source of carbon. When bacteria are grown on glucose, IDH is fully active and unphosphorylated, but when grown on acetate or ethanol, the activity of IDH declines drastically concomitant with its phosphorylation. The chain is Isocitrate dehydrogenase kinase/phosphatase from Rhodopseudomonas palustris (strain HaA2).